A 694-amino-acid polypeptide reads, in one-letter code: Lon-like protease BrxL (694 aa).

The protein belongs to the BrxL family.

Functionally, BREX systems (bacteriophage exclusion) provide immunity against bacteriophage. Part of a type 1 BREX system which protects against dsDNA phage. This system allows phage adsorption but prevents phage DNA replication, without degradation of the phage DNA. Methylation of bacterial DNA by PglX guides self/non-self discrimination. When the brxA-brxB-brxC-pglX-pglZ-brxL genes are transformed into a susceptible E.coli strain (BW25113) they confer very high resistance to infection by bacteriophage VR7 and VpaE1, about 100-fold protection against lambda, T5 and T7 and no protection against RNA phage Qbeta, ssDNA phage M13 or dSDNA phage T4 and VR5. Glycosylated phage DNA is not susceptible to BREX. The BREX system does not confer resistance to lysogenic lambda phage, i.e. prophage that are integrated into the chromosomal DNA and then induced to form phage. Expression of this protein alone is toxic. In Escherichia coli O9:H4 (strain HS), this protein is Lon-like protease BrxL.